Consider the following 231-residue polypeptide: Aminodeoxyfutalosine nucleosidase (231 aa).

The Proton acceptor role is filled by Glu14. Substrate contacts are provided by residues Gly81, Val155, and 175–176; that span reads ME. Catalysis depends on Asp199, which acts as the Proton donor.

It belongs to the PNP/UDP phosphorylase family. As to quaternary structure, homodimer.

The catalysed reaction is 6-amino-6-deoxyfutalosine + H2O = dehypoxanthine futalosine + adenine. It carries out the reaction S-adenosyl-L-homocysteine + H2O = S-(5-deoxy-D-ribos-5-yl)-L-homocysteine + adenine. The enzyme catalyses S-methyl-5'-thioadenosine + H2O = 5-(methylsulfanyl)-D-ribose + adenine. It catalyses the reaction 5'-deoxyadenosine + H2O = 5-deoxy-D-ribose + adenine. The protein operates within quinol/quinone metabolism; menaquinone biosynthesis. It participates in amino-acid biosynthesis; L-methionine biosynthesis via salvage pathway; S-methyl-5-thio-alpha-D-ribose 1-phosphate from S-methyl-5'-thioadenosine (hydrolase route): step 1/2. Its function is as follows. Catalyzes the direct conversion of aminodeoxyfutalosine (AFL) into dehypoxanthine futalosine (DHFL) and adenine via the hydrolysis of the N-glycosidic bond; this reaction seems to represent an essential step in the menaquinone biosynthesis pathway in Helicobacter species. Can also probably catalyzes the hydrolysis of 5'-methylthioadenosine (MTA) and S-adenosylhomocysteine (SAH) to adenine and the corresponding thioribose, 5'-methylthioribose and S-ribosylhomocysteine, respectively. These other activities highlight the tremendous versatility of the enzyme, which also plays key roles in S-adenosylmethionine recycling and in the biosynthesis of the quorum-sensing molecule autoinducer-2. Does not act on futalosine (FL) as substrate. The polypeptide is Aminodeoxyfutalosine nucleosidase (mtnN) (Helicobacter pylori (strain ATCC 700392 / 26695) (Campylobacter pylori)).